The primary structure comprises 523 residues: Calcium and calcium/calmodulin-dependent serine/threonine-protein kinase DMI-3 (523 aa).

Positions 12-306 (YEVSEILGRG…ALELLSDPWV (295 aa)) constitute a Protein kinase domain. ATP is bound by residues 18–26 (LGRGGFSVV) and Lys-47. The active-site Proton acceptor is Asp-171. Phosphothreonine is present on Thr-271. The interval 329–342 (ARRKLRAAAIASVW) is calmodulin-binding. EF-hand domains are found at residues 400 to 435 (SLIP…LKNS), 436 to 471 (KGED…LPYD), and 478 to 513 (TEPG…DSSL). Residues Asp-413, Asn-415, Asp-417, Thr-419, Glu-424, Asp-449, Asp-451, Ser-453, Cys-455, Glu-460, Asp-491, Asn-493, Asp-495, Lys-497, and Glu-502 each coordinate Ca(2+).

The protein belongs to the protein kinase superfamily. CAMK Ser/Thr protein kinase family. CaMK subfamily. As to quaternary structure, interacts with IPD3. Post-translationally, autophosphorylation. As to expression, highly expressed in roots. Expressed in root hairs and nodules. Expressed at low levels in flowers. Not detected in leaves or stems.

The protein resides in the nucleus. The enzyme catalyses L-seryl-[protein] + ATP = O-phospho-L-seryl-[protein] + ADP + H(+). It catalyses the reaction L-threonyl-[protein] + ATP = O-phospho-L-threonyl-[protein] + ADP + H(+). Activated by calcium. Autophosphorylation may play an important role in the regulation of the kinase activity. Functionally, during nodulation, plays a central role in bacterial infection and contributes to nodule organogenesis. Protein kinase that recognizes the calcium spiking induced by Nod factors and translates this signal to components controlling nodulation and mycorrhizal infection responses. May phosphorylate the NSP1 protein. Required in epidermal and cortical cells to promote infection thread (IT) formation in root hairs. The sequence is that of Calcium and calcium/calmodulin-dependent serine/threonine-protein kinase DMI-3 from Medicago truncatula (Barrel medic).